The following is a 293-amino-acid chain: Elongation factor Ts (293 aa).

The interval 80–83 (TDFV) is involved in Mg(2+) ion dislocation from EF-Tu.

It belongs to the EF-Ts family.

It localises to the cytoplasm. Its function is as follows. Associates with the EF-Tu.GDP complex and induces the exchange of GDP to GTP. It remains bound to the aminoacyl-tRNA.EF-Tu.GTP complex up to the GTP hydrolysis stage on the ribosome. The chain is Elongation factor Ts from Lacticaseibacillus casei (strain BL23) (Lactobacillus casei).